The following is a 578-amino-acid chain: Hyaluronan synthase 1 (578 aa).

At 1-25 the chain is on the cytoplasmic side; the sequence is MRQQDAPKPTPAACRCSGLARRVLT. A helical membrane pass occupies residues 26-46; sequence IAFALLILGLMTWAYAAGVPL. Topologically, residues 47 to 52 are extracellular; that stretch reads ASDRYG. The chain crosses the membrane as a helical span at residues 53 to 73; the sequence is LLAFGLYGAFLSAHLVAQSLF. Residues 74 to 399 lie on the Cytoplasmic side of the membrane; the sequence is AYLEHRRVAA…NALWWHRHHA (326 aa). Residues 400–420 form a helical membrane-spanning segment; sequence WMTYEAVVSGLFPFFVAATVL. Over 421–430 the chain is Extracellular; the sequence is RLFYAGRPWA. The helical transmembrane segment at 431 to 451 threads the bilayer; the sequence is LLWVLLCVQGVALAKAAFAAW. The Cytoplasmic portion of the chain corresponds to 452–457; the sequence is LRGCLR. A helical transmembrane segment spans residues 458-478; the sequence is MVLLSLYAPLYMCGLLPAKFL. The Extracellular segment spans residues 479-497; the sequence is ALVTMNQSGWGTSGRRKLA. Residues 498–518 form a helical membrane-spanning segment; it reads ANYVPLLPLALWALLLLGGLV. The Cytoplasmic segment spans residues 519–540; that stretch reads RSVAHEARADWSGPSRAAEAYH. The chain crosses the membrane as a helical span at residues 541-561; that stretch reads LAAGAGAYVGYWVAMLTLYWV. The Extracellular portion of the chain corresponds to 562–578; the sequence is GVRRLCRRRTGGYRVQV.

It belongs to the NodC/HAS family. The cofactor is Mg(2+). As to expression, widely expressed. Highly expressed in ovary followed by spleen, thymus, prostate, testes and large intestine. Weakly expressed in small intestine.

The protein localises to the membrane. The enzyme catalyses [hyaluronan](n) + UDP-N-acetyl-alpha-D-glucosamine = N-acetyl-beta-D-glucosaminyl-(1-&gt;4)-[hyaluronan](n) + UDP + H(+). The catalysed reaction is N-acetyl-beta-D-glucosaminyl-(1-&gt;4)-[hyaluronan](n) + UDP-alpha-D-glucuronate = [hyaluronan](n+1) + UDP + H(+). It participates in glycan biosynthesis; hyaluronan biosynthesis. Catalyzes the addition of GlcNAc or GlcUA monosaccharides to the nascent hyaluronan polymer. Therefore, it is essential to hyaluronan synthesis a major component of most extracellular matrices that has a structural role in tissues architectures and regulates cell adhesion, migration and differentiation. This is one of the isozymes catalyzing that reaction. Also able to catalyze the synthesis of chito-oligosaccharide depending on the substrate. This Homo sapiens (Human) protein is Hyaluronan synthase 1 (HAS1).